Consider the following 185-residue polypeptide: UPF0301 protein MS0260 (185 aa).

Belongs to the UPF0301 (AlgH) family.

The polypeptide is UPF0301 protein MS0260 (Mannheimia succiniciproducens (strain KCTC 0769BP / MBEL55E)).